The chain runs to 194 residues: Nucleoside triphosphate pyrophosphatase (194 aa).

Aspartate 71 acts as the Proton acceptor in catalysis.

It belongs to the Maf family. Requires a divalent metal cation as cofactor.

The protein localises to the cytoplasm. The enzyme catalyses a ribonucleoside 5'-triphosphate + H2O = a ribonucleoside 5'-phosphate + diphosphate + H(+). It catalyses the reaction a 2'-deoxyribonucleoside 5'-triphosphate + H2O = a 2'-deoxyribonucleoside 5'-phosphate + diphosphate + H(+). In terms of biological role, nucleoside triphosphate pyrophosphatase. May have a dual role in cell division arrest and in preventing the incorporation of modified nucleotides into cellular nucleic acids. This Paramagnetospirillum magneticum (strain ATCC 700264 / AMB-1) (Magnetospirillum magneticum) protein is Nucleoside triphosphate pyrophosphatase.